Reading from the N-terminus, the 531-residue chain is Phosphoinositide phospholipase C 9 (531 aa).

In terms of domain architecture, PI-PLC X-box spans 107-253 (RDMNAPLSHY…LQNKILISRR (147 aa)). Residues 265 to 385 (ENGVELEIQE…GYVKKPNFLL (121 aa)) enclose the PI-PLC Y-box domain. A Phosphoserine modification is found at serine 276. The C2 domain maps to 386 to 513 (NAGSSGVFYP…EGIRAVPLYD (128 aa)).

Ca(2+) is required as a cofactor. Expressed in leaves, roots, flowers and siliques.

The protein resides in the cell membrane. The catalysed reaction is a 1,2-diacyl-sn-glycero-3-phospho-(1D-myo-inositol-4,5-bisphosphate) + H2O = 1D-myo-inositol 1,4,5-trisphosphate + a 1,2-diacyl-sn-glycerol + H(+). Its function is as follows. The production of the second messenger molecules diacylglycerol (DAG) and inositol 1,4,5-trisphosphate (IP3) is mediated by activated phosphatidylinositol-specific phospholipase C enzymes. This is Phosphoinositide phospholipase C 9 (PLC9) from Arabidopsis thaliana (Mouse-ear cress).